The chain runs to 257 residues: Small ribosomal subunit protein uS2 (257 aa).

The protein belongs to the universal ribosomal protein uS2 family.

The sequence is that of Small ribosomal subunit protein uS2 from Trichlorobacter lovleyi (strain ATCC BAA-1151 / DSM 17278 / SZ) (Geobacter lovleyi).